The sequence spans 408 residues: MANINENYLKLKAGYLFPEISKRVKTYSEKNPSAKIIRLGIGDVTLPIVPSVVDAMIAASKEMGTAGGFHGYGPEQGYSFLLKSIANNDYGSLGIKIDESEIFVSDGSKCDCGNIQEIFSTDAKIAVSDPVYPVYVDTNVMAGRTGEIGADGRYSNLIYMPATKENGFQPEIPKEKADIIYLCYPNNPTGTVTTKEALRAWVEYAKKNNSIILYDSAYEAFISEPGVPRSIYEVAGAKEVAIEFRSFSKTAGFTGLRCAYIVIPKELKGRTRGGEEVSINSLWSRRHTTKFNGVSYVTQKGAEACYSPQGKKEIQASIAYYMSNAAKIREGLKKAGYEVFGGVNAPYIWLKTSDNLSSWDFFDRLLDKAQVVGTPGSGFGPAGEGYFRLSAFGKKEDVEEAIARISFL.

Residues tyrosine 15 and glycine 42 each coordinate substrate. Pyridoxal 5'-phosphate-binding positions include tyrosine 72, serine 108–lysine 109, tyrosine 132, asparagine 187, tyrosine 218, and serine 246–serine 248. Substrate-binding residues include lysine 109, tyrosine 132, and asparagine 187. The residue at position 249 (lysine 249) is an N6-(pyridoxal phosphate)lysine. Residues arginine 257 and asparagine 292 each contribute to the pyridoxal 5'-phosphate site. The substrate site is built by asparagine 292 and arginine 388.

The protein belongs to the class-I pyridoxal-phosphate-dependent aminotransferase family. LL-diaminopimelate aminotransferase subfamily. As to quaternary structure, homodimer. It depends on pyridoxal 5'-phosphate as a cofactor.

The enzyme catalyses (2S,6S)-2,6-diaminopimelate + 2-oxoglutarate = (S)-2,3,4,5-tetrahydrodipicolinate + L-glutamate + H2O + H(+). It functions in the pathway amino-acid biosynthesis; L-lysine biosynthesis via DAP pathway; LL-2,6-diaminopimelate from (S)-tetrahydrodipicolinate (aminotransferase route): step 1/1. Its function is as follows. Involved in the synthesis of meso-diaminopimelate (m-DAP or DL-DAP), required for both lysine and peptidoglycan biosynthesis. Catalyzes the direct conversion of tetrahydrodipicolinate to LL-diaminopimelate. This Leptospira borgpetersenii serovar Hardjo-bovis (strain JB197) protein is LL-diaminopimelate aminotransferase.